The chain runs to 578 residues: tRNA (guanine(26)-N(2))-dimethyltransferase (578 aa).

The Trm1 methyltransferase domain occupies 18-451 (NVIRERNAEI…APPAVLWDIL (434 aa)). Residue R43 coordinates S-adenosyl-L-methionine. Positions 63–92 (EKALKKQRKKVKEQEDEKTTPVPEDPPVYE) are disordered. R113 and D131 together coordinate S-adenosyl-L-methionine. Residues C295, C298, C335, and C338 each coordinate Zn(2+). Residues 491 to 578 (EANPKSRKSA…PKQPKLEATA (88 aa)) form a disordered region. The segment covering 564–578 (DVEHLPKQPKLEATA) has biased composition (basic and acidic residues).

This sequence belongs to the class I-like SAM-binding methyltransferase superfamily. Trm1 family.

It catalyses the reaction guanosine(26) in tRNA + 2 S-adenosyl-L-methionine = N(2)-dimethylguanosine(26) in tRNA + 2 S-adenosyl-L-homocysteine + 2 H(+). In terms of biological role, dimethylates a single guanine residue at position 26 of most tRNAs using S-adenosyl-L-methionine as donor of the methyl groups. This is tRNA (guanine(26)-N(2))-dimethyltransferase from Drosophila melanogaster (Fruit fly).